The primary structure comprises 492 residues: Beclin 1-associated autophagy-related key regulator (492 aa).

Residue S29 is modified to Phosphoserine. Residues 70–180 adopt a coiled-coil conformation; the sequence is RDRERFIDKK…KLGDLVEKKT (111 aa). 2 disordered regions span residues 213–232 and 411–473; these read TSGRDPADVSSETDSAMTSS and GVAG…AGGM. Polar residues predominate over residues 222 to 232; it reads SSETDSAMTSS. Position 416 is a phosphoserine (S416). Residues 424-433 show a composition bias toward acidic residues; it reads VSDEETDLGT. T429 carries the post-translational modification Phosphothreonine. The span at 447–473 shows a compositional bias: low complexity; sequence PSQPVEVSQSQSTQASPPIASSSAGGM.

The protein belongs to the ATG14 family. In terms of assembly, forms homooligomers; homo-oligomerization is essential for the roles in membrane tethering and enhancement of SNARE-mediated fusion. Component of the PI3K (PI3KC3/PI3K-III/class III phosphatidylinositol 3-kinase) complex I (PI3KC3-C1) in which the core composed of the catalytic subunit PIK3C3, the regulatory subunit PIK3R4 and BECN1 is associated with ATG14. PI3KC3-C1 displays a V-shaped architecture with PIK3R4 serving as a bridge between PIK3C3 and the ATG14:BECN1 subcomplex. PI3KC3-C1 can associate with further regulatory subunits. Interacts with PIK3CB. Interacts (via coiled-coil domain) with BECN2 (via coiled-coil domain); this interaction is tighter than BECN2 self-association. Interacts with the STX17-SNAP29 binary t-SNARE complex. Interacts with NRBF2. Interacts with PIK3C3 and BECN1; this interaction is increased in the absence of TMEM39A. Interacts with STEEP1; the interaction is required for trafficking of STING1 from the endoplasmic reticulum. Interacts with ARMC3 (via ARM domains). In terms of processing, ubiquitinated via 'Lys-6', 'Lys-11' and 'Lys-63'-linked polyubiquitin chains on multiple lysines by MARCHF7, leading to ATG14 aggregation and loss of interaction with STX17.

It is found in the cytoplasm. The protein resides in the endoplasmic reticulum membrane. The protein localises to the preautophagosomal structure membrane. Required for both basal and inducible autophagy. Determines the localization of the autophagy-specific PI3-kinase complex. Plays a role in autophagosome formation and MAP1LC3/LC3 conjugation to phosphatidylethanolamine. Promotes BECN1 translocation from the trans-Golgi network to autophagosomes. Enhances PIK3C3 activity in a BECN1-dependent manner. Essential for the autophagy-dependent phosphorylation of BECN1. Stimulates the phosphorylation of BECN1, but suppresses the phosphorylation PIK3C3 by AMPK. Binds to STX17-SNAP29 binary t-SNARE complex on autophagosomes and primes it for VAMP8 interaction to promote autophagosome-endolysosome fusion. Modulates the hepatic lipid metabolism. This Rattus norvegicus (Rat) protein is Beclin 1-associated autophagy-related key regulator.